The sequence spans 410 residues: Multifunctional CCA protein (410 aa).

Gly8 and Arg11 together coordinate ATP. Positions 8 and 11 each coordinate CTP. The Mg(2+) site is built by Asp21 and Asp23. Positions 91, 138, and 141 each coordinate ATP. CTP contacts are provided by Arg91, Arg138, and Arg141. Positions 229 to 347 (TGIHQEMVSD…AQLALVCEAD (119 aa)) constitute an HD domain.

The protein belongs to the tRNA nucleotidyltransferase/poly(A) polymerase family. Bacterial CCA-adding enzyme type 1 subfamily. As to quaternary structure, monomer. Can also form homodimers and oligomers. It depends on Mg(2+) as a cofactor. Ni(2+) serves as cofactor.

The catalysed reaction is a tRNA precursor + 2 CTP + ATP = a tRNA with a 3' CCA end + 3 diphosphate. It catalyses the reaction a tRNA with a 3' CCA end + 2 CTP + ATP = a tRNA with a 3' CCACCA end + 3 diphosphate. Its function is as follows. Catalyzes the addition and repair of the essential 3'-terminal CCA sequence in tRNAs without using a nucleic acid template. Adds these three nucleotides in the order of C, C, and A to the tRNA nucleotide-73, using CTP and ATP as substrates and producing inorganic pyrophosphate. tRNA 3'-terminal CCA addition is required both for tRNA processing and repair. Also involved in tRNA surveillance by mediating tandem CCA addition to generate a CCACCA at the 3' terminus of unstable tRNAs. While stable tRNAs receive only 3'-terminal CCA, unstable tRNAs are marked with CCACCA and rapidly degraded. This chain is Multifunctional CCA protein, found in Xanthomonas axonopodis pv. citri (strain 306).